An 866-amino-acid chain; its full sequence is Putative linoleate 9S-lipoxygenase 3 (866 aa).

The 129-residue stretch at 33-161 (NDFGATVIDG…KYRYDRVFFA (129 aa)) folds into the PLAT domain. Residues 164–866 (AYLPSQMPAA…AKGIPNSISI (703 aa)) enclose the Lipoxygenase domain. A disordered region spans residues 206–250 (YNDLGSPDSGNPRPILGGSPDTPYPRRGRTGRKPTTTDPDSESRL). Positions 521, 526, 712, 716, and 866 each coordinate Fe cation.

Belongs to the lipoxygenase family. It depends on Fe cation as a cofactor.

It catalyses the reaction (9Z,12Z)-octadecadienoate + O2 = (9S)-hydroperoxy-(10E,12Z)-octadecadienoate. Its pathway is lipid metabolism; oxylipin biosynthesis. Plant lipoxygenase may be involved in a number of diverse aspects of plant physiology including growth and development, pest resistance, and senescence or responses to wounding. Catalyzes the hydroperoxidation of lipids containing a cis,cis-1,4-pentadiene structure. The protein is Putative linoleate 9S-lipoxygenase 3 of Oryza sativa subsp. japonica (Rice).